Here is a 443-residue protein sequence, read N- to C-terminus: Serine/threonine-protein kinase ISR1 (443 aa).

The Protein kinase domain occupies 135–415; that stretch reads LPSNKLVGQG…LRNDLFQDWK (281 aa). Residues 141-149 and K169 contribute to the ATP site; that span reads VGQGSYSYV. D280 (proton acceptor) is an active-site residue.

It belongs to the protein kinase superfamily. Ser/Thr protein kinase family.

It carries out the reaction L-seryl-[protein] + ATP = O-phospho-L-seryl-[protein] + ADP + H(+). The catalysed reaction is L-threonyl-[protein] + ATP = O-phospho-L-threonyl-[protein] + ADP + H(+). Its function is as follows. Probable serine/threonine protein kinase which may function redundantly with MPK1-independent branch of the PCK1 pathway that is presumed to be required for the tolerance to high temperatures and staurosporine. This Saccharomyces cerevisiae (strain ATCC 204508 / S288c) (Baker's yeast) protein is Serine/threonine-protein kinase ISR1 (ISR1).